The following is a 324-amino-acid chain: tRNA N6-adenosine threonylcarbamoyltransferase (324 aa).

Fe cation contacts are provided by His-107, His-111, and Tyr-127. Substrate is bound by residues 127-131, Asp-159, Gly-172, Glu-176, and Asn-257; that span reads YVSGG. Asp-285 is a binding site for Fe cation.

This sequence belongs to the KAE1 / TsaD family. In terms of assembly, monomer. Component of the KEOPS complex that consists of Kae1, Bud32, Cgi121 and Pcc1; the whole complex dimerizes. It depends on Fe(2+) as a cofactor.

It localises to the cytoplasm. It carries out the reaction L-threonylcarbamoyladenylate + adenosine(37) in tRNA = N(6)-L-threonylcarbamoyladenosine(37) in tRNA + AMP + H(+). In terms of biological role, required for the formation of a threonylcarbamoyl group on adenosine at position 37 (t(6)A37) in tRNAs that read codons beginning with adenine. Is a component of the KEOPS complex that is probably involved in the transfer of the threonylcarbamoyl moiety of threonylcarbamoyl-AMP (TC-AMP) to the N6 group of A37. Kae1 likely plays a direct catalytic role in this reaction, but requires other protein(s) of the complex to fulfill this activity. The chain is tRNA N6-adenosine threonylcarbamoyltransferase from Thermococcus sibiricus (strain DSM 12597 / MM 739).